An 842-amino-acid chain; its full sequence is Protein P (842 aa).

The segment at 1 to 177 is terminal protein domain (TP); the sequence is MPLSYQHFRR…FCGSPYTWEQ (177 aa). Residues 178–345 form a spacer region; that stretch reads DLQHGAFLDG…YCLSHLVNLL (168 aa). A disordered region spans residues 184-238; it reads FLDGPSRVGKEPFRQQSSRIPSRSPVGPSIQSKYQQSRLGLQSQKGPLARGQQGR. The segment covering 197-208 has biased composition (low complexity); the sequence is RQQSSRIPSRSP. Polar residues predominate over residues 212 to 228; the sequence is SIQSKYQQSRLGLQSQK. The tract at residues 346 to 689 is polymerase/reverse transcriptase domain (RT); the sequence is QDWGPCTEHG…YMNLYPVARQ (344 aa). The Reverse transcriptase domain occupies 356 to 599; the sequence is EHHIRIPRTP…YSLNFMGYVI (244 aa). Asp-428, Asp-550, and Asp-551 together coordinate Mg(2+).

The protein belongs to the hepadnaviridae P protein family.

It carries out the reaction DNA(n) + a 2'-deoxyribonucleoside 5'-triphosphate = DNA(n+1) + diphosphate. The enzyme catalyses Endonucleolytic cleavage to 5'-phosphomonoester.. With respect to regulation, activated by host HSP70 and HSP40 in vitro to be able to bind the epsilon loop of the pgRNA. Because deletion of the RNase H region renders the protein partly chaperone-independent, the chaperones may be needed indirectly to relieve occlusion of the RNA-binding site by this domain. Inhibited by several reverse-transcriptase inhibitors: Lamivudine, Adefovir and Entecavir. In terms of biological role, multifunctional enzyme that converts the viral RNA genome into dsDNA in viral cytoplasmic capsids. This enzyme displays a DNA polymerase activity that can copy either DNA or RNA templates, and a ribonuclease H (RNase H) activity that cleaves the RNA strand of RNA-DNA heteroduplexes in a partially processive 3'- to 5'-endonucleasic mode. Neo-synthesized pregenomic RNA (pgRNA) are encapsidated together with the P protein, and reverse-transcribed inside the nucleocapsid. Initiation of reverse-transcription occurs first by binding the epsilon loop on the pgRNA genome, and is initiated by protein priming, thereby the 5'-end of (-)DNA is covalently linked to P protein. Partial (+)DNA is synthesized from the (-)DNA template and generates the relaxed circular DNA (RC-DNA) genome. After budding and infection, the RC-DNA migrates in the nucleus, and is converted into a plasmid-like covalently closed circular DNA (cccDNA). The activity of P protein does not seem to be necessary for cccDNA generation, and is presumably released from (+)DNA by host nuclear DNA repair machinery. The sequence is that of Protein P from Hepatitis B virus genotype G (isolate IG29227/2000) (HBV-G).